The chain runs to 1396 residues: DNA-directed RNA polymerase subunit beta (1396 aa).

Belongs to the RNA polymerase beta chain family. As to quaternary structure, the RNAP catalytic core consists of 2 alpha, 1 beta, 1 beta' and 1 omega subunit. When a sigma factor is associated with the core the holoenzyme is formed, which can initiate transcription.

The enzyme catalyses RNA(n) + a ribonucleoside 5'-triphosphate = RNA(n+1) + diphosphate. DNA-dependent RNA polymerase catalyzes the transcription of DNA into RNA using the four ribonucleoside triphosphates as substrates. This chain is DNA-directed RNA polymerase subunit beta, found in Erythrobacter litoralis (strain HTCC2594).